The chain runs to 307 residues: Cyclin-dependent kinase 5 activator 1 (307 aa).

The N-myristoyl glycine moiety is linked to residue glycine 2. At serine 8 the chain carries Phosphoserine; by CDK5. Residues 97 to 135 (TFAQPPPAQPPAPPASQLSGSQTGVSSSVKKAPHPAVSS) form a disordered region. Over residues 100-110 (QPPPAQPPAPP) the composition is skewed to pro residues. Residues 112 to 125 (SQLSGSQTGVSSSV) show a composition bias toward polar residues. Threonine 138 carries the phosphothreonine; by CDK5 modification.

This sequence belongs to the cyclin-dependent kinase 5 activator family. In terms of assembly, heterodimer composed of a catalytic subunit CDK5 and a regulatory subunit CDK5R1 (p25) and macromolecular complex composed of at least CDK5, CDK5R1 (p35) and CDK5RAP1 or CDK5RAP2 or CDK5RAP3. Only the heterodimer shows kinase activity. Interacts with EPHA4 and NGEF; may mediate the activation of NGEF by EPHA4. Interacts with RASGRF2. The complex p35/CDK5 interacts with CLOCK. The p35 form is proteolytically cleaved by calpain, giving rise to the p25 form. P35 has a 5 to 10 fold shorter half-life compared to p25. The conversion results in deregulation of the CDK5 kinase: p25/CDK5 kinase displays an increased and altered tau phosphorylation in comparison to the p35/CDK5 kinase in vivo. Post-translationally, myristoylated. A proper myristoylation signal is essential for the proper distribution of p35. In terms of processing, phosphorylation at Ser-8 and Thr-138 by CDK5 prevents calpain-mediated proteolysis. Ubiquitinated, leading to its degradation: degradation of p35 by proteasome results in down-regulation of CDK5 activity. During this process, CDK5 phosphorylates p35 and induces its ubiquitination and subsequent degradation. Ubiquitinated by the CRL2(FEM1B) complex, which recognizes the -Gly-Leu-Asp-Arg C-degron at the C-terminus, leading to its degradation. In terms of tissue distribution, brain and neuron specific.

It is found in the cell membrane. The protein resides in the cell projection. The protein localises to the neuron projection. It localises to the nucleus. Its subcellular location is the cytoplasm. It is found in the perinuclear region. The protein resides in the perikaryon. P35 is a neuron specific activator of CDK5. The complex p35/CDK5 is required for neurite outgrowth and cortical lamination. Involved in dendritic spine morphogenesis by mediating the EFNA1-EPHA4 signaling. Activator of TPKII. The complex p35/CDK5 participates in the regulation of the circadian clock by modulating the function of CLOCK protein: phosphorylates CLOCK at 'Thr-451' and 'Thr-461' and regulates the transcriptional activity of the CLOCK-BMAL1 heterodimer in association with altered stability and subcellular distribution. In Bos taurus (Bovine), this protein is Cyclin-dependent kinase 5 activator 1 (CDK5R1).